The sequence spans 331 residues: Aldo-keto reductase YhdN (331 aa).

NADP(+) is bound by residues 20-21 and aspartate 52; that span reads TW. The Proton donor role is filled by tyrosine 57. Residues glutamine 175, 203–208, lysine 214, arginine 227, 280–282, and glutamine 286 each bind NADP(+); these read YGSLCR and GAR.

Belongs to the aldo/keto reductase family. Aldo/keto reductase 11 subfamily. In terms of assembly, monomer.

Its function is as follows. Aldo-keto reductase (AKR) that displays broad substrate specificity in vitro. Is able to reduce the standard AKR substrates DL-glyceraldehyde, D-erythrose, methylglyoxal, p-nitrobenzaldehyde, benzaldehyde and butyraldehyde, in the presence of NADPH. Cannot use NADH as a cosubstrate. Does not act on glucose, 2-pyridine carboxyaldehyde, fructose and xylose. The physiological function of this enzyme is not clear. May play a role in bacterial stress response and/or in detoxification of reactive aldehydes. This is Aldo-keto reductase YhdN (yhdN) from Bacillus subtilis (strain 168).